Consider the following 386-residue polypeptide: MDIGKMINDDNGSDSRRTSVKSLLNSPPTGLPSSDDRPDSKASSTSDLAQQLTNEMESGEDDDDEDAAAAVNHKPRRYSRPPIWATKWQGTGRHAERDHRPPPHRQDRRDPRMERQSGGSRALPASSTTTITGCPPSISGIKPFESVTRTVTSWLHAHLSTMSPEQLQTVELEAKIGTIQHKKAGADRARLDLPIVTEAVVNQQYVQAQCSFSSQLPESLLEEAKRILDAADPKFIKSTEHTIHRDEIYEGQQDKGNLRITRDDVTGRQVAKIRKKAIAHIMIHCPTDPFDIRLSLATESPTDDVPQGVCRTRRKDRISYLYDGFRADLTKVSGSSMSSELEMEADSHKLIGYFTDRNDPHNMDKVEELLQILLDSMRYVNRRLKA.

The segment at 1–137 is disordered; that stretch reads MDIGKMINDD…TTTITGCPPS (137 aa). 2 stretches are compositionally biased toward polar residues: residues 20-32 and 41-56; these read VKSLLNSPPTGLP and KASSTSDLAQQLTNEM. Positions 57-67 are enriched in acidic residues; that stretch reads ESGEDDDDEDA. A compositionally biased stretch (basic and acidic residues) spans 93–115; sequence RHAERDHRPPPHRQDRRDPRMER.

This sequence belongs to the fungal TPase family. As to quaternary structure, heterodimer. The mRNA-capping enzyme is composed of two separate chains alpha and beta, respectively a mRNA guanylyltransferase and an mRNA 5'-triphosphate monophosphatase. The cofactor is Mg(2+).

Its subcellular location is the nucleus. It catalyses the reaction a 5'-end triphospho-ribonucleoside in mRNA + H2O = a 5'-end diphospho-ribonucleoside in mRNA + phosphate + H(+). First step of mRNA capping. Converts the 5'-triphosphate end of a nascent mRNA chain into a diphosphate end. This is mRNA-capping enzyme subunit beta (CET1) from Yarrowia lipolytica (strain CLIB 122 / E 150) (Yeast).